A 345-amino-acid chain; its full sequence is S-adenosylmethionine:tRNA ribosyltransferase-isomerase (345 aa).

The protein belongs to the QueA family. In terms of assembly, monomer.

Its subcellular location is the cytoplasm. It carries out the reaction 7-aminomethyl-7-carbaguanosine(34) in tRNA + S-adenosyl-L-methionine = epoxyqueuosine(34) in tRNA + adenine + L-methionine + 2 H(+). It functions in the pathway tRNA modification; tRNA-queuosine biosynthesis. In terms of biological role, transfers and isomerizes the ribose moiety from AdoMet to the 7-aminomethyl group of 7-deazaguanine (preQ1-tRNA) to give epoxyqueuosine (oQ-tRNA). The polypeptide is S-adenosylmethionine:tRNA ribosyltransferase-isomerase (Shewanella sp. (strain ANA-3)).